A 600-amino-acid chain; its full sequence is Aspartate--tRNA(Asp/Asn) ligase (600 aa).

Glu174 provides a ligand contact to L-aspartate. The interval 198 to 201 (QLFK) is aspartate. Arg220 serves as a coordination point for L-aspartate. ATP is bound by residues 220 to 222 (RDE) and Gln229. L-aspartate is bound at residue His457. Residue Glu491 participates in ATP binding. L-aspartate is bound at residue Arg498. ATP is bound at residue 543–546 (GLDR).

It belongs to the class-II aminoacyl-tRNA synthetase family. Type 1 subfamily. In terms of assembly, homodimer.

It is found in the cytoplasm. The enzyme catalyses tRNA(Asx) + L-aspartate + ATP = L-aspartyl-tRNA(Asx) + AMP + diphosphate. Its function is as follows. Aspartyl-tRNA synthetase with relaxed tRNA specificity since it is able to aspartylate not only its cognate tRNA(Asp) but also tRNA(Asn). Reaction proceeds in two steps: L-aspartate is first activated by ATP to form Asp-AMP and then transferred to the acceptor end of tRNA(Asp/Asn). The sequence is that of Aspartate--tRNA(Asp/Asn) ligase from Burkholderia multivorans (strain ATCC 17616 / 249).